The chain runs to 384 residues: S-adenosylmethionine synthase (384 aa).

Residue H15 coordinates ATP. Position 17 (D17) interacts with Mg(2+). E43 contacts K(+). The L-methionine site is built by E56 and Q99. The segment at 99–109 is flexible loop; it reads QSPDINQGVDR. ATP-binding positions include 164–166, 230–231, D239, 245–246, A262, and K266; these read DAK, RF, and RK. D239 is an L-methionine binding site. K270 serves as a coordination point for L-methionine.

It belongs to the AdoMet synthase family. As to quaternary structure, homotetramer; dimer of dimers. The cofactor is Mg(2+). It depends on K(+) as a cofactor.

The protein localises to the cytoplasm. It catalyses the reaction L-methionine + ATP + H2O = S-adenosyl-L-methionine + phosphate + diphosphate. It participates in amino-acid biosynthesis; S-adenosyl-L-methionine biosynthesis; S-adenosyl-L-methionine from L-methionine: step 1/1. Its function is as follows. Catalyzes the formation of S-adenosylmethionine (AdoMet) from methionine and ATP. The overall synthetic reaction is composed of two sequential steps, AdoMet formation and the subsequent tripolyphosphate hydrolysis which occurs prior to release of AdoMet from the enzyme. The protein is S-adenosylmethionine synthase of Edwardsiella ictaluri (strain 93-146).